Reading from the N-terminus, the 156-residue chain is 2-C-methyl-D-erythritol 2,4-cyclodiphosphate synthase (156 aa).

A divalent metal cation is bound by residues Asp-9 and His-11. Residues 9–11 (DAH) and 35–36 (HS) each bind 4-CDP-2-C-methyl-D-erythritol 2-phosphate. His-43 contributes to the a divalent metal cation binding site. Residue 57–59 (DIG) participates in 4-CDP-2-C-methyl-D-erythritol 2-phosphate binding.

This sequence belongs to the IspF family. As to quaternary structure, homotrimer. The cofactor is a divalent metal cation.

The catalysed reaction is 4-CDP-2-C-methyl-D-erythritol 2-phosphate = 2-C-methyl-D-erythritol 2,4-cyclic diphosphate + CMP. It functions in the pathway isoprenoid biosynthesis; isopentenyl diphosphate biosynthesis via DXP pathway; isopentenyl diphosphate from 1-deoxy-D-xylulose 5-phosphate: step 4/6. Involved in the biosynthesis of isopentenyl diphosphate (IPP) and dimethylallyl diphosphate (DMAPP), two major building blocks of isoprenoid compounds. Catalyzes the conversion of 4-diphosphocytidyl-2-C-methyl-D-erythritol 2-phosphate (CDP-ME2P) to 2-C-methyl-D-erythritol 2,4-cyclodiphosphate (ME-CPP) with a corresponding release of cytidine 5-monophosphate (CMP). This is 2-C-methyl-D-erythritol 2,4-cyclodiphosphate synthase from Hydrogenobaculum sp. (strain Y04AAS1).